The sequence spans 423 residues: MKVLLIGSGGREHALAWKIAQSPRLTKLYAAPGNPGIAEEAAIVDLHTENHEDVVDFCRTHAIDFVVVGPEAPLVAGLGDVLRAADIPTFGPSAAAAQLEGSKGFTKDLCARYGIPTGAYRRFTDAEPAKAYIREEGAPIVIKADGLAAGKGVTVAMSLDEAFAAVDECFAGAFGAAGAEVVVEAYLDGEEASFFCLCDGKSVLPLASAQDHKRVGDGDTGPNTGGMGAYSPAPVMTAEMVERTMKEIIEPTVRGMAESGYPFTGVFFAGLMITEKGPELIEYNVRFGDPECQVLMMRLESDLLPLLYAAATGTLEGMKAEWRDEAALTVVMASRGYPGAYEKDTPIAALPDASAATKVFHAGTAMKGGGLVAAGGRVLNVTATGKTVGEAKDAAYAAVRDVSWENGFYRNDIGWRAVARETA.

One can recognise an ATP-grasp domain in the interval 107–312; sequence KDLCARYGIP…LLPLLYAAAT (206 aa). Residue 133–193 coordinates ATP; sequence IREEGAPIVI…EAYLDGEEAS (61 aa). 2 residues coordinate Mg(2+): glutamate 282 and asparagine 284.

It belongs to the GARS family. Requires Mg(2+) as cofactor. Mn(2+) is required as a cofactor.

It carries out the reaction 5-phospho-beta-D-ribosylamine + glycine + ATP = N(1)-(5-phospho-beta-D-ribosyl)glycinamide + ADP + phosphate + H(+). The protein operates within purine metabolism; IMP biosynthesis via de novo pathway; N(1)-(5-phospho-D-ribosyl)glycinamide from 5-phospho-alpha-D-ribose 1-diphosphate: step 2/2. The chain is Phosphoribosylamine--glycine ligase from Rhizobium meliloti (strain 1021) (Ensifer meliloti).